The following is a 506-amino-acid chain: Glycerol kinase (506 aa).

Thr12 serves as a coordination point for ADP. Residues Thr12, Thr13, and Ser14 each coordinate ATP. Thr12 is a binding site for sn-glycerol 3-phosphate. Residue Arg16 participates in ADP binding. Sn-glycerol 3-phosphate-binding residues include Arg82, Glu83, Tyr134, and Asp246. Residues Arg82, Glu83, Tyr134, Asp246, and Gln247 each coordinate glycerol. Positions 268 and 312 each coordinate ADP. ATP is bound by residues Thr268, Gly312, Gln316, and Gly413. Gly413 and Asn417 together coordinate ADP.

This sequence belongs to the FGGY kinase family.

The catalysed reaction is glycerol + ATP = sn-glycerol 3-phosphate + ADP + H(+). It functions in the pathway polyol metabolism; glycerol degradation via glycerol kinase pathway; sn-glycerol 3-phosphate from glycerol: step 1/1. With respect to regulation, inhibited by fructose 1,6-bisphosphate (FBP). Functionally, key enzyme in the regulation of glycerol uptake and metabolism. Catalyzes the phosphorylation of glycerol to yield sn-glycerol 3-phosphate. The chain is Glycerol kinase from Leifsonia xyli subsp. xyli (strain CTCB07).